Consider the following 260-residue polypeptide: Small ribosomal subunit protein uS2 (260 aa).

The protein belongs to the universal ribosomal protein uS2 family.

This is Small ribosomal subunit protein uS2 from Mesorhizobium japonicum (strain LMG 29417 / CECT 9101 / MAFF 303099) (Mesorhizobium loti (strain MAFF 303099)).